We begin with the raw amino-acid sequence, 853 residues long: DNA mismatch repair protein MutS (853 aa).

Position 614–621 (614–621 (GPNMGGKS)) interacts with ATP.

Belongs to the DNA mismatch repair MutS family.

Functionally, this protein is involved in the repair of mismatches in DNA. It is possible that it carries out the mismatch recognition step. This protein has a weak ATPase activity. This is DNA mismatch repair protein MutS from Escherichia coli (strain SMS-3-5 / SECEC).